The sequence spans 304 residues: Ribonuclease Z (304 aa).

Residues His63, His65, Asp67, His68, His143, Asp213, and His271 each coordinate Zn(2+). Asp67 functions as the Proton acceptor in the catalytic mechanism.

This sequence belongs to the RNase Z family. As to quaternary structure, homodimer. Zn(2+) is required as a cofactor.

It catalyses the reaction Endonucleolytic cleavage of RNA, removing extra 3' nucleotides from tRNA precursor, generating 3' termini of tRNAs. A 3'-hydroxy group is left at the tRNA terminus and a 5'-phosphoryl group is left at the trailer molecule.. In terms of biological role, zinc phosphodiesterase, which displays some tRNA 3'-processing endonuclease activity. Probably involved in tRNA maturation, by removing a 3'-trailer from precursor tRNA. In Bacteroides fragilis (strain YCH46), this protein is Ribonuclease Z.